Consider the following 251-residue polypeptide: Ubiquinone/menaquinone biosynthesis C-methyltransferase UbiE (251 aa).

Residues T74, D95, 123–124 (NA), and S140 each bind S-adenosyl-L-methionine.

The protein belongs to the class I-like SAM-binding methyltransferase superfamily. MenG/UbiE family.

The catalysed reaction is a 2-demethylmenaquinol + S-adenosyl-L-methionine = a menaquinol + S-adenosyl-L-homocysteine + H(+). It carries out the reaction a 2-methoxy-6-(all-trans-polyprenyl)benzene-1,4-diol + S-adenosyl-L-methionine = a 5-methoxy-2-methyl-3-(all-trans-polyprenyl)benzene-1,4-diol + S-adenosyl-L-homocysteine + H(+). Its pathway is quinol/quinone metabolism; menaquinone biosynthesis; menaquinol from 1,4-dihydroxy-2-naphthoate: step 2/2. It functions in the pathway cofactor biosynthesis; ubiquinone biosynthesis. Functionally, methyltransferase required for the conversion of demethylmenaquinol (DMKH2) to menaquinol (MKH2) and the conversion of 2-polyprenyl-6-methoxy-1,4-benzoquinol (DDMQH2) to 2-polyprenyl-3-methyl-6-methoxy-1,4-benzoquinol (DMQH2). In Klebsiella pneumoniae (strain 342), this protein is Ubiquinone/menaquinone biosynthesis C-methyltransferase UbiE.